A 316-amino-acid chain; its full sequence is Acetaldehyde dehydrogenase (316 aa).

11 to 14 (SGNI) contributes to the NAD(+) binding site. Cys-131 (acyl-thioester intermediate) is an active-site residue. NAD(+) is bound by residues 162-170 (SAGPGTRAN) and Asn-289.

This sequence belongs to the acetaldehyde dehydrogenase family. In terms of assembly, interacts with MhpE.

The catalysed reaction is acetaldehyde + NAD(+) + CoA = acetyl-CoA + NADH + H(+). It functions in the pathway aromatic compound metabolism; 3-phenylpropanoate degradation. Its function is as follows. Catalyzes the conversion of acetaldehyde to acetyl-CoA, using NAD(+) and coenzyme A. Is the final enzyme in the meta-cleavage pathway for the degradation of aromatic compounds. This chain is Acetaldehyde dehydrogenase, found in Escherichia coli O157:H7.